The chain runs to 359 residues: Dihydroorotate dehydrogenase (quinone) (359 aa).

Residues 65 to 69 (AGLDK) and T89 each bind FMN. A substrate-binding site is contributed by K69. 114–118 (NRLGF) lines the substrate pocket. FMN contacts are provided by N149 and N182. A substrate-binding site is contributed by N182. Residue S185 is the Nucleophile of the active site. A substrate-binding site is contributed by N187. Residues K233 and T261 each contribute to the FMN site. Residue 262–263 (NT) participates in substrate binding. FMN-binding positions include G284, G313, and 334–335 (YT).

It belongs to the dihydroorotate dehydrogenase family. Type 2 subfamily. Monomer. The cofactor is FMN.

The protein resides in the cell membrane. The catalysed reaction is (S)-dihydroorotate + a quinone = orotate + a quinol. Its pathway is pyrimidine metabolism; UMP biosynthesis via de novo pathway; orotate from (S)-dihydroorotate (quinone route): step 1/1. In terms of biological role, catalyzes the conversion of dihydroorotate to orotate with quinone as electron acceptor. This chain is Dihydroorotate dehydrogenase (quinone), found in Paracidovorax citrulli (strain AAC00-1) (Acidovorax citrulli).